The primary structure comprises 262 residues: Adenosine deaminase RL5 (262 aa).

Cu cation contacts are provided by asparagine 36, tyrosine 40, methionine 68, histidine 73, cysteine 75, asparagine 114, cysteine 118, histidine 135, cysteine 172, cysteine 175, cysteine 234, and cysteine 237.

It belongs to the purine nucleoside phosphorylase YfiH/LACC1 family. In terms of assembly, homodimer. Requires Cu cation as cofactor.

The enzyme catalyses adenosine + phosphate = alpha-D-ribose 1-phosphate + adenine. It carries out the reaction S-methyl-5'-thioadenosine + phosphate = 5-(methylsulfanyl)-alpha-D-ribose 1-phosphate + adenine. It catalyses the reaction inosine + phosphate = alpha-D-ribose 1-phosphate + hypoxanthine. The catalysed reaction is adenosine + H2O + H(+) = inosine + NH4(+). Its function is as follows. Purine nucleoside enzyme that catalyzes the phosphorolysis of adenosine and inosine nucleosides, yielding D-ribose 1-phosphate and the respective free bases, adenine and hypoxanthine. Also catalyzes the phosphorolysis of S-methyl-5'-thioadenosine into adenine and S-methyl-5-thio-alpha-D-ribose 1-phosphate. Also has adenosine deaminase activity. Also acts as a multicopper oxidase able to oxidize a wide variety of polyphenols and related compounds in vitro. Displays substrate preference as follows: syringaldazine &gt; 2,6-dimethoxyphenol &gt; veratryl alcohol &gt; guaiacol &gt; tetramethylbenzidine &gt; 4-methoxybenzyl alcohol &gt; 2,2'-azino-bis(3-ethylbenzthiazoline-6-sulfonic acid) (ABTS) &gt;&gt; phenol red &gt; 1-hydroxybenzotriazole. Cannot use 3,4-dimetoxybenzyl alcohol and violuric acid as substrates. As this enzyme is derived from a rumen microbial community, it may have a role in the digestion of complex plant materials such as ryegrass lignin. In Unknown prokaryotic organism, this protein is Adenosine deaminase RL5.